The primary structure comprises 682 residues: Methionine--tRNA ligase (682 aa).

Positions 15-25 (PYANGAIHLGH) match the 'HIGH' region motif. 4 residues coordinate Zn(2+): C146, C149, C159, and C162. The short motif at 331–335 (KMSKS) is the 'KMSKS' region element. K334 contributes to the ATP binding site. Positions 580–682 (DFAKLDMRVA…SGVTAGMQVK (103 aa)) constitute a tRNA-binding domain.

Belongs to the class-I aminoacyl-tRNA synthetase family. MetG type 1 subfamily. In terms of assembly, homodimer. Requires Zn(2+) as cofactor.

It localises to the cytoplasm. The enzyme catalyses tRNA(Met) + L-methionine + ATP = L-methionyl-tRNA(Met) + AMP + diphosphate. Is required not only for elongation of protein synthesis but also for the initiation of all mRNA translation through initiator tRNA(fMet) aminoacylation. This chain is Methionine--tRNA ligase, found in Haemophilus influenzae (strain ATCC 51907 / DSM 11121 / KW20 / Rd).